A 291-amino-acid chain; its full sequence is ATP synthase gamma chain (291 aa).

Belongs to the ATPase gamma chain family. F-type ATPases have 2 components, CF(1) - the catalytic core - and CF(0) - the membrane proton channel. CF(1) has five subunits: alpha(3), beta(3), gamma(1), delta(1), epsilon(1). CF(0) has three main subunits: a, b and c.

The protein localises to the cell inner membrane. Produces ATP from ADP in the presence of a proton gradient across the membrane. The gamma chain is believed to be important in regulating ATPase activity and the flow of protons through the CF(0) complex. The polypeptide is ATP synthase gamma chain (Verminephrobacter eiseniae (strain EF01-2)).